Reading from the N-terminus, the 170-residue chain is Peptide deformylase 1 (170 aa).

Fe cation contacts are provided by Cys92 and His135. The active site involves Glu136. Position 139 (His139) interacts with Fe cation.

This sequence belongs to the polypeptide deformylase family. The cofactor is Fe(2+).

The enzyme catalyses N-terminal N-formyl-L-methionyl-[peptide] + H2O = N-terminal L-methionyl-[peptide] + formate. Removes the formyl group from the N-terminal Met of newly synthesized proteins. Requires at least a dipeptide for an efficient rate of reaction. N-terminal L-methionine is a prerequisite for activity but the enzyme has broad specificity at other positions. This is Peptide deformylase 1 from Coxiella burnetii (strain RSA 493 / Nine Mile phase I).